The following is a 364-amino-acid chain: MHVVLAGGGTAGHIEPALALADALRRQDPTVGITALGTERGLETRLVPERGYELALIPAVPLPRKPTPELITVPGRLRGTIKATEQILERTKADAVAGFGGYVALPAYLAAKRLGVPIVVHEANARPGLANKIGSRYAAQVAVSTPDSKLRNSRYIGIPLRRSIATLDRAAARPEARAMFGLDPNLPTLLVTGGSQGARRLNEVIQQVAPWLQQAGIQILHAVGPKNELPQVHQMPGMPPYIPVSYLDRMDLAYAAADMMLCRAGAMTVAELSAVGLPAAYVPLPIGNGEQRLNAQPVVKAGGGLLVDDAELTPEWLQQNVLPVLADPHRLYEMSRAAAEFGRRDADDLLVGMVYEAIAARARR.

Residues 10 to 12 (TAG), asparagine 124, arginine 161, serine 195, and glutamine 291 contribute to the UDP-N-acetyl-alpha-D-glucosamine site.

It belongs to the glycosyltransferase 28 family. MurG subfamily.

The protein localises to the cell membrane. It catalyses the reaction di-trans,octa-cis-undecaprenyl diphospho-N-acetyl-alpha-D-muramoyl-L-alanyl-D-glutamyl-meso-2,6-diaminopimeloyl-D-alanyl-D-alanine + UDP-N-acetyl-alpha-D-glucosamine = di-trans,octa-cis-undecaprenyl diphospho-[N-acetyl-alpha-D-glucosaminyl-(1-&gt;4)]-N-acetyl-alpha-D-muramoyl-L-alanyl-D-glutamyl-meso-2,6-diaminopimeloyl-D-alanyl-D-alanine + UDP + H(+). It functions in the pathway cell wall biogenesis; peptidoglycan biosynthesis. Cell wall formation. Catalyzes the transfer of a GlcNAc subunit on undecaprenyl-pyrophosphoryl-MurNAc-pentapeptide (lipid intermediate I) to form undecaprenyl-pyrophosphoryl-MurNAc-(pentapeptide)GlcNAc (lipid intermediate II). In Streptomyces coelicolor (strain ATCC BAA-471 / A3(2) / M145), this protein is UDP-N-acetylglucosamine--N-acetylmuramyl-(pentapeptide) pyrophosphoryl-undecaprenol N-acetylglucosamine transferase.